Here is a 128-residue protein sequence, read N- to C-terminus: Large ribosomal subunit protein bL20 (128 aa).

Belongs to the bacterial ribosomal protein bL20 family.

Binds directly to 23S ribosomal RNA and is necessary for the in vitro assembly process of the 50S ribosomal subunit. It is not involved in the protein synthesizing functions of that subunit. The chain is Large ribosomal subunit protein bL20 from Corynebacterium efficiens (strain DSM 44549 / YS-314 / AJ 12310 / JCM 11189 / NBRC 100395).